The primary structure comprises 527 residues: Probable guanine deaminase (527 aa).

Positions 79 and 81 each coordinate Zn(2+). Residues 81 to 84, 212 to 213, 239 to 242, and D329 each bind substrate; these read HAPQ, RF, and HISE. Positions 239 and 329 each coordinate Zn(2+).

Belongs to the metallo-dependent hydrolases superfamily. ATZ/TRZ family. Zn(2+) is required as a cofactor.

It carries out the reaction guanine + H2O + H(+) = xanthine + NH4(+). Its pathway is purine metabolism; guanine degradation; xanthine from guanine: step 1/1. Catalyzes the hydrolytic deamination of guanine, producing xanthine and ammonia. This is Probable guanine deaminase from Schizosaccharomyces pombe (strain 972 / ATCC 24843) (Fission yeast).